Consider the following 396-residue polypeptide: Metacaspase-1 (396 aa).

A compositionally biased stretch (gly residues) spans 1–20; the sequence is MSGYPGQGYQGQGYGQGYGQ. Positions 1–86 are disordered; it reads MSGYPGQGYQ…PQGMQQFGHG (86 aa). Positions 47-62 are enriched in low complexity; that stretch reads HYQYGPPQGGYQYPPQ. A compositionally biased stretch (polar residues) spans 72-81; that stretch reads QAHQPPQGMQ. Active-site residues include His-186 and Cys-242.

It belongs to the peptidase C14B family.

In terms of biological role, involved in cell death (apoptosis). The chain is Metacaspase-1 (MCA1) from Pyricularia oryzae (strain 70-15 / ATCC MYA-4617 / FGSC 8958) (Rice blast fungus).